The sequence spans 365 residues: Class E basic helix-loop-helix protein 22 (365 aa).

3 disordered regions span residues 34-93, 134-156, and 188-225; these read AFRS…GGGG, GRGSVAESSGGEQSPDDDSDGRC, and HLHGGAGLPPGGSTGSGGGGSGGGGGGGSSSKKSKEQK. Residues 82–93 are compositionally biased toward gly residues; the sequence is GGGGAGGGGGGG. Gly residues predominate over residues 191–216; that stretch reads GGAGLPPGGSTGSGGGGSGGGGGGGS. The bHLH domain occupies 226-280; sequence ALRLNINARERRRMHDLNDALDELRAVIPYAHSPSVRKLSKIATLLLAKNYILMQ.

In terms of assembly, heterodimer with other bHLH proteins, like TCF3/E47. As to expression, kidney, lung, brain and pancreas (insulinoma).

It localises to the nucleus. Its function is as follows. Inhibits DNA binding of TCF3/E47 homodimers and TCF3 (E47)/NEUROD1 heterodimers and acts as a strong repressor of Neurod1 and Myod-responsive genes, probably by heterodimerization with class a basic helix-loop-helix factors. Despite the presence of an intact basic domain, does not bind to DNA. The chain is Class E basic helix-loop-helix protein 22 (BHLHE22) from Mesocricetus auratus (Golden hamster).